The chain runs to 510 residues: ATP synthase subunit alpha (510 aa).

169-176 (GDRQTGKT) provides a ligand contact to ATP.

Belongs to the ATPase alpha/beta chains family. As to quaternary structure, F-type ATPases have 2 components, CF(1) - the catalytic core - and CF(0) - the membrane proton channel. CF(1) has five subunits: alpha(3), beta(3), gamma(1), delta(1), epsilon(1). CF(0) has three main subunits: a(1), b(2) and c(9-12). The alpha and beta chains form an alternating ring which encloses part of the gamma chain. CF(1) is attached to CF(0) by a central stalk formed by the gamma and epsilon chains, while a peripheral stalk is formed by the delta and b chains.

Its subcellular location is the cell inner membrane. The catalysed reaction is ATP + H2O + 4 H(+)(in) = ADP + phosphate + 5 H(+)(out). Produces ATP from ADP in the presence of a proton gradient across the membrane. The alpha chain is a regulatory subunit. The chain is ATP synthase subunit alpha from Rickettsia rickettsii (strain Iowa).